A 551-amino-acid chain; its full sequence is Membrane protein insertase YidC (551 aa).

The helical transmembrane segment at 3–23 (ANHIRILLLVTIAIMFISLMG) threads the bilayer. Residues 33-47 (NTKQQTSATQNNSHY) are compositionally biased toward polar residues. A disordered region spans residues 33–58 (NTKQQTSATQNNSHYDNADSSTNTDV). The next 3 membrane-spanning stretches (helical) occupy residues 361 to 381 (LVGNWGLAIILVTCLIKLIFY), 431 to 451 (LSGCLPMLIQIPIFISLYWVL), and 504 to 524 (VMMFLPVIFTFLFASFPSGLV).

This sequence belongs to the OXA1/ALB3/YidC family. Type 1 subfamily. As to quaternary structure, interacts with the Sec translocase complex via SecD. Specifically interacts with transmembrane segments of nascent integral membrane proteins during membrane integration.

It localises to the cell inner membrane. Its function is as follows. Required for the insertion and/or proper folding and/or complex formation of integral membrane proteins into the membrane. Involved in integration of membrane proteins that insert both dependently and independently of the Sec translocase complex, as well as at least some lipoproteins. Aids folding of multispanning membrane proteins. The polypeptide is Membrane protein insertase YidC (Francisella tularensis subsp. novicida (strain U112)).